The sequence spans 425 residues: Bifunctional phosphoribosylaminoimidazole carboxylase/phosphoribosylaminoimidazole succinocarboxamide synthetase (425 aa).

Ala-2 carries the post-translational modification N-acetylalanine. The tract at residues 2-260 (ATAEVLNIGR…WVADRVELLL (259 aa)) is SAICAR synthetase domain. Phosphotyrosine is present on Tyr-22. Phosphoserine is present on Ser-27. Lys-36 carries the N6-acetyllysine modification. The residue at position 107 (Ser-107) is a Phosphoserine. The residue at position 238 (Thr-238) is a Phosphothreonine. An N6-acetyllysine modification is found at Lys-247. The linker stretch occupies residues 261–266 (KSNSQC). The AIR carboxylase domain stretch occupies residues 267–425 (RVVVLMGSTS…ADKKIRECNL (159 aa)). Phosphoserine is present on Ser-274. Ser-332 is a CO2 binding site.

The protein in the N-terminal section; belongs to the SAICAR synthetase family. It in the C-terminal section; belongs to the AIR carboxylase family. Class II subfamily. In terms of assembly, homooctamer.

The catalysed reaction is 5-amino-1-(5-phospho-D-ribosyl)imidazole-4-carboxylate + L-aspartate + ATP = (2S)-2-[5-amino-1-(5-phospho-beta-D-ribosyl)imidazole-4-carboxamido]succinate + ADP + phosphate + 2 H(+). It catalyses the reaction 5-amino-1-(5-phospho-D-ribosyl)imidazole-4-carboxylate + H(+) = 5-amino-1-(5-phospho-beta-D-ribosyl)imidazole + CO2. The protein operates within purine metabolism; IMP biosynthesis via de novo pathway; 5-amino-1-(5-phospho-D-ribosyl)imidazole-4-carboxamide from 5-amino-1-(5-phospho-D-ribosyl)imidazole-4-carboxylate: step 1/2. It functions in the pathway purine metabolism; IMP biosynthesis via de novo pathway; 5-amino-1-(5-phospho-D-ribosyl)imidazole-4-carboxylate from 5-amino-1-(5-phospho-D-ribosyl)imidazole (carboxylase route): step 1/1. In terms of biological role, bifunctional phosphoribosylaminoimidazole carboxylase and phosphoribosylaminoimidazole succinocarboxamide synthetase catalyzing two reactions of the de novo purine biosynthetic pathway. This chain is Bifunctional phosphoribosylaminoimidazole carboxylase/phosphoribosylaminoimidazole succinocarboxamide synthetase, found in Rattus norvegicus (Rat).